The sequence spans 28 residues: Probable small spore coat assembly protein B (28 aa).

A helical membrane pass occupies residues 4-24 (VFAGGFALLVVLFILLIIIGA).

The protein belongs to the SscA family.

It localises to the membrane. The sequence is that of Probable small spore coat assembly protein B from Bacillus subtilis (strain 168).